The following is a 252-amino-acid chain: Proteasome subunit alpha type-7-1B (252 aa).

It belongs to the peptidase T1A family. As to quaternary structure, the 26S proteasome consists of a 20S proteasome core and two 19S regulatory subunits. The 20S proteasome core is composed of 28 subunits that are arranged in four stacked rings, resulting in a barrel-shaped structure. The two end rings are each formed by seven alpha subunits, and the two central rings are each formed by seven beta subunits. The catalytic chamber with the active sites is on the inside of the barrel. Testis specific.

It localises to the cytoplasm. Its subcellular location is the nucleus. Its function is as follows. The proteasome is a multicatalytic proteinase complex which is characterized by its ability to cleave peptides with Arg, Phe, Tyr, Leu, and Glu adjacent to the leaving group at neutral or slightly basic pH. The proteasome has an ATP-dependent proteolytic activity. The sequence is that of Proteasome subunit alpha type-7-1B (Prosalpha4T2) from Drosophila melanogaster (Fruit fly).